A 558-amino-acid chain; its full sequence is Tyrosine N-monooxygenase (558 aa).

Residues Val-13–Thr-33 form a helical membrane-spanning segment. Residues Thr-48 to Pro-67 form a disordered region. Over residues Thr-49–Asn-65 the composition is skewed to low complexity. Positions 138, 167, 422, 491, and 493 each coordinate heme b.

It belongs to the cytochrome P450 family. Requires heme b as cofactor.

The protein resides in the endoplasmic reticulum membrane. It carries out the reaction L-tyrosine + 2 reduced [NADPH--hemoprotein reductase] + 2 O2 = (E)-4-hydroxyphenylacetaldehyde oxime + 2 oxidized [NADPH--hemoprotein reductase] + CO2 + 3 H2O + 2 H(+). The enzyme catalyses L-tyrosine + reduced [NADPH--hemoprotein reductase] + O2 = N-hydroxy-L-tyrosine + oxidized [NADPH--hemoprotein reductase] + H2O + 2 H(+). The catalysed reaction is N-hydroxy-L-tyrosine + reduced [NADPH--hemoprotein reductase] + O2 = N,N-dihydroxy-L-tyrosine + oxidized [NADPH--hemoprotein reductase] + H2O + H(+). It catalyses the reaction N,N-dihydroxy-L-tyrosine + H(+) = (E)-4-hydroxyphenylacetaldehyde oxime + CO2 + H2O. The protein operates within secondary metabolite biosynthesis; dhurrin biosynthesis; dhurrin from L-tyrosine: step 1/3. Functionally, cytochrome P450 involved in the biosynthesis of the cyanogenic glucoside dhurrin. Catalyzes the conversion of L-tyrosine to p-hydroxyphenylacetaldehyde oxime, via the N-hydroxy-L-tyrosine and N,N-dihydroxy-L-tyrosine intermediates. Produces the (E) isomer of the final oxime product. This Sorghum bicolor (Sorghum) protein is Tyrosine N-monooxygenase (CYP79A1).